The following is a 1489-amino-acid chain: WD repeat-containing protein 7 (1489 aa).

7 WD repeats span residues 17–56 (APTH…EVNP), 62–104 (GHTA…CIEF), 156–199 (ISPD…SGMQ), 324–366 (VICP…EKQE), 404–443 (NEPL…IVQL), 462–507 (GHRN…MKHI), and 558–597 (RHLF…LDRC). Disordered stretches follow at residues 754 to 783 (IKEH…YRAS) and 911 to 947 (GDHM…QGQI). Basic and acidic residues predominate over residues 767-782 (EARRQSREDSDPEYRA). The residue at position 935 (Ser935) is a Phosphoserine. WD repeat units follow at residues 1350–1389 (PAIC…CQTI) and 1391–1431 (GHKG…LGSI). Residue Ser1455 is modified to Phosphoserine.

This chain is WD repeat-containing protein 7 (Wdr7), found in Mus musculus (Mouse).